The following is a 316-amino-acid chain: Phosphatidylglycerol--prolipoprotein diacylglyceryl transferase (316 aa).

The next 3 helical transmembrane spans lie at 18 to 38, 47 to 67, and 95 to 115; these read PIPI…AIWL, GGNP…GIIG, and NGGL…AVFF. A 1,2-diacyl-sn-glycero-3-phospho-(1'-sn-glycerol) is bound at residue R141. 2 helical membrane passes run 188–208 and 251–271; these read VHPT…LLMW and INTI…FLLK. The tract at residues 292-316 is disordered; that stretch reads AVASPDGKPLPKAGEGIDGETPSTR.

The protein belongs to the Lgt family.

It is found in the cell membrane. It catalyses the reaction L-cysteinyl-[prolipoprotein] + a 1,2-diacyl-sn-glycero-3-phospho-(1'-sn-glycerol) = an S-1,2-diacyl-sn-glyceryl-L-cysteinyl-[prolipoprotein] + sn-glycerol 1-phosphate + H(+). It participates in protein modification; lipoprotein biosynthesis (diacylglyceryl transfer). Functionally, catalyzes the transfer of the diacylglyceryl group from phosphatidylglycerol to the sulfhydryl group of the N-terminal cysteine of a prolipoprotein, the first step in the formation of mature lipoproteins. The sequence is that of Phosphatidylglycerol--prolipoprotein diacylglyceryl transferase from Corynebacterium glutamicum (strain ATCC 13032 / DSM 20300 / JCM 1318 / BCRC 11384 / CCUG 27702 / LMG 3730 / NBRC 12168 / NCIMB 10025 / NRRL B-2784 / 534).